The primary structure comprises 95 residues: Co-chaperonin GroES (95 aa).

It belongs to the GroES chaperonin family. In terms of assembly, heptamer of 7 subunits arranged in a ring. Interacts with the chaperonin GroEL.

It localises to the cytoplasm. Together with the chaperonin GroEL, plays an essential role in assisting protein folding. The GroEL-GroES system forms a nano-cage that allows encapsulation of the non-native substrate proteins and provides a physical environment optimized to promote and accelerate protein folding. GroES binds to the apical surface of the GroEL ring, thereby capping the opening of the GroEL channel. This chain is Co-chaperonin GroES, found in Rhodobacter capsulatus (Rhodopseudomonas capsulata).